Consider the following 1029-residue polypeptide: Protein SUPPRESSOR OF PHYA-105 1 (1029 aa).

The interval 42 to 69 is disordered; that stretch reads SETANSDCPGSSAHRNVDLTKPPPPEEA. Residues 188-529 enclose the Protein kinase domain; sequence VQMKTPVSSS…ARDILKSELI (342 aa). ATP is bound by residues 194 to 202 and K216; that span reads VSSSNFSQL. Residues 213 to 269 form a disordered region; that stretch reads VVGKNQETPPEFVSDQDLGSKEKKLDISKSPTPHDVLPLKSSPKGNGMVSHGDGNHS. Basic and acidic residues predominate over residues 230-239; that stretch reads LGSKEKKLDI. Residue D316 is the Proton acceptor of the active site. A disordered region spans residues 347 to 392; that stretch reads EDLNRRRPVVEESSSGGRDSKKRKMDLHLNSPGNQLQATSTGRPFK. Positions 377–388 are enriched in polar residues; the sequence is SPGNQLQATSTG. The stretch at 557–589 forms a coiled coil; that stretch reads VQKKKKASKLLQDIQTLEDDIKEAERRYSSNVS. The tract at residues 653-679 is disordered; the sequence is ARSDKTLKDRDRCSENQNENQDMSTKG. Positions 654-666 are enriched in basic and acidic residues; sequence RSDKTLKDRDRCS. The segment covering 667 to 679 has biased composition (polar residues); it reads ENQNENQDMSTKG. 7 WD repeats span residues 714 to 753, 763 to 803, 806 to 846, 848 to 888, 892 to 930, 932 to 971, and 997 to 1029; these read NSAS…NESV, VNKS…GFSQ, EHQK…SLGT, WSPA…TPWC, GHEK…SSGL, PGAC…YSYY, and DNGQ…LKLV. A DWD box motif is present at residues 866-881; it reads LAFGSADYKVYCYDLR.

As to quaternary structure, interacts with CO, COP1, HFR1, HY5 and PHYA. Light induces dissociation of the SPA1/COP1 complex. Binds to CRY1 in response to blue light, this interaction prevents SPA1/COP1 complex formation but stimulate CRY2/COP1 complex, and thus avoid COP1-dependent degradation of the transcription factor HY5 by the proteasome and promotes hypocotyl elongation.

Its subcellular location is the nucleus speckle. The protein resides in the nucleus. It is found in the PML body. In terms of biological role, controls normal photoperiodic flowering and regulates circadian rhythms. Required for suppression of photomorphogenesis in dark-grown seedlings and for normal elongation growth of adult plants. Integral component of the COP1/SPA E3 ubiquitin-protein ligase complex. Involved in HY5, HFR1, LAF1 and CO degradation. This Arabidopsis thaliana (Mouse-ear cress) protein is Protein SUPPRESSOR OF PHYA-105 1 (SPA1).